A 173-amino-acid chain; its full sequence is Ribosome maturation factor RimM (173 aa).

Residues 94-166 (VQEEPYIDII…KIIVELPMGF (73 aa)) enclose the PRC barrel domain.

This sequence belongs to the RimM family. As to quaternary structure, binds ribosomal protein uS19.

It localises to the cytoplasm. Functionally, an accessory protein needed during the final step in the assembly of 30S ribosomal subunit, possibly for assembly of the head region. Essential for efficient processing of 16S rRNA. May be needed both before and after RbfA during the maturation of 16S rRNA. It has affinity for free ribosomal 30S subunits but not for 70S ribosomes. The chain is Ribosome maturation factor RimM from Amoebophilus asiaticus (strain 5a2).